Consider the following 807-residue polypeptide: MSGIEEKCNESSYSADSIKVLKGLEAVRKRPGMYIGDVGDGSGLHHMIYEVVDNSIDEALAGYCDLIRVTLNKNGSVTVSDNGRGIPVEIHEEEGISAAEVIMTQLHAGGKFDQHSYKISGGLHGVGVSVVNALSEWLELRIWRNNKEYFIRFNNGITEAPLSIVKENIDKKGTEVTFFPSVGIFTNIEFDFVTIEHRLRELAFLNSGVKILLIDNRFEEVKKVEFFYTGGIEAYVQYIDRAKHAIHPCIVVNTEHVESGISLELAIHWNDSYHENILCFTNNIRQRDGGTHLSAFKSAITRVITSYLDTTGLNKKTKHDFSGEDTREGICCVLSVKVPDPKFSSQTKDKLVSSEVRPVVENAVYTKVLEWFEEHPIEAKAIIAKIMEAANAREAARKARELTRRKSALEVSNLPGKLADCHAKDPAISELFIVEGDSAGGTAKQGRDSKIQAILPLRGKILNVERARFDKMLSSEQIGTLITALGISVEREFSLEKLRYHKVIIMTDADVDGSHIRTLLLTFFYRHMPELINKGYLYIAQPPLYKVKSGASELYLKNEQALQNYLIKSTINDTKLILDGQEQLIGYNLEDLINKVVQFNCLLDRASKKFNRSITEILAINDLFNKKIFEPESGSRLQKALDVLNNLEESPDKTNLQVLKHENRIEFFHFSRGLKNTKILLKEQLELFEFVEISQFALSIFDIFSKRLKLIVKGKEFDVVTPSQLLNTIIECGKKGITIQRFKGLGEMNSDQLWDTTLDPTKRTLLQVRVSEVDEAEGIFSTLMGDVVEPRRLFIQANALNVMNLDI.

In terms of domain architecture, Toprim spans 429–543; it reads SELFIVEGDS…KGYLYIAQPP (115 aa). The Mg(2+) site is built by E435, D508, and D510.

It belongs to the type II topoisomerase GyrB family. As to quaternary structure, heterotetramer, composed of two GyrA and two GyrB chains. In the heterotetramer, GyrA contains the active site tyrosine that forms a transient covalent intermediate with DNA, while GyrB binds cofactors and catalyzes ATP hydrolysis. Requires Mg(2+) as cofactor. Mn(2+) is required as a cofactor. Ca(2+) serves as cofactor.

The protein localises to the cytoplasm. It carries out the reaction ATP-dependent breakage, passage and rejoining of double-stranded DNA.. In terms of biological role, a type II topoisomerase that negatively supercoils closed circular double-stranded (ds) DNA in an ATP-dependent manner to modulate DNA topology and maintain chromosomes in an underwound state. Negative supercoiling favors strand separation, and DNA replication, transcription, recombination and repair, all of which involve strand separation. Also able to catalyze the interconversion of other topological isomers of dsDNA rings, including catenanes and knotted rings. Type II topoisomerases break and join 2 DNA strands simultaneously in an ATP-dependent manner. The chain is DNA gyrase subunit B from Rickettsia typhi (strain ATCC VR-144 / Wilmington).